Consider the following 509-residue polypeptide: GMP synthase [glutamine-hydrolyzing] (509 aa).

The Glutamine amidotransferase type-1 domain maps to 4 to 194; that stretch reads LVLVVDFGGQ…LYNICGLENS (191 aa). The Nucleophile role is filled by C81. Residues H168 and E170 contribute to the active site. Residues 195-384 form the GMPS ATP-PPase domain; the sequence is WSMASFAEEK…LGIPHHLVWR (190 aa). 222–228 serves as a coordination point for ATP; it reads SGGVDSS.

Homodimer.

The enzyme catalyses XMP + L-glutamine + ATP + H2O = GMP + L-glutamate + AMP + diphosphate + 2 H(+). Its pathway is purine metabolism; GMP biosynthesis; GMP from XMP (L-Gln route): step 1/1. Its function is as follows. Catalyzes the synthesis of GMP from XMP. This chain is GMP synthase [glutamine-hydrolyzing], found in Clostridium perfringens (strain 13 / Type A).